The primary structure comprises 239 residues: 1-(5-phosphoribosyl)-5-[(5-phosphoribosylamino)methylideneamino] imidazole-4-carboxamide isomerase (239 aa).

The active-site Proton acceptor is the D8. D129 (proton donor) is an active-site residue.

The protein belongs to the HisA/HisF family.

It localises to the cytoplasm. It carries out the reaction 1-(5-phospho-beta-D-ribosyl)-5-[(5-phospho-beta-D-ribosylamino)methylideneamino]imidazole-4-carboxamide = 5-[(5-phospho-1-deoxy-D-ribulos-1-ylimino)methylamino]-1-(5-phospho-beta-D-ribosyl)imidazole-4-carboxamide. Its pathway is amino-acid biosynthesis; L-histidine biosynthesis; L-histidine from 5-phospho-alpha-D-ribose 1-diphosphate: step 4/9. The polypeptide is 1-(5-phosphoribosyl)-5-[(5-phosphoribosylamino)methylideneamino] imidazole-4-carboxamide isomerase (Bacillus cereus (strain AH187)).